The sequence spans 503 residues: TGF-beta receptor type-1 (503 aa).

The first 29 residues, 1–29 (MEVAAGAPRSRLLLFVLAATATLAPEATA), serve as a signal peptide directing secretion. At 30-126 (FQCFCHLCTK…PPSGLGPVEL (97 aa)) the chain is on the extracellular side. 5 disulfides stabilise this stretch: Cys32–Cys50, Cys34–Cys37, Cys44–Cys67, Cys82–Cys96, and Cys97–Cys102. An N-linked (GlcNAc...) asparagine glycan is attached at Asn41. Residues 127–147 (AAVIAGPVCFVCISLMLMVYI) traverse the membrane as a helical segment. The Cytoplasmic segment spans residues 148 to 503 (CHNRTVIHHR…QLSQQEGIKM (356 aa)). Position 165 is a phosphoserine (Ser165). Residues 175–204 (TTLKDLIYDMTTSGSGSGLPLLVQRTIART) enclose the GS domain. Thr185 and Thr186 each carry phosphothreonine; by TGFBR2. Phosphoserine; by TGFBR2 is present on residues Ser187, Ser189, and Ser191. An FKBP1A-binding motif is present at residues 193 to 194 (LP). The Protein kinase domain maps to 205–495 (IVLQESIGKG…LRIKKTLSQL (291 aa)). ATP-binding positions include 211–219 (IGKGRFGEV) and Lys232. The Proton acceptor role is filled by Asp333. Lys391 is covalently cross-linked (Glycyl lysine isopeptide (Lys-Gly) (interchain with G-Cter in SUMO)).

It belongs to the protein kinase superfamily. TKL Ser/Thr protein kinase family. TGFB receptor subfamily. As to quaternary structure, homodimer; in the endoplasmic reticulum but also at the cell membrane. Heterohexamer; TGFB1, TGFB2 and TGFB3 homodimeric ligands assemble a functional receptor composed of two TGFBR1 and TGFBR2 heterodimers to form a ligand-receptor heterohexamer. The respective affinity of TGBRB1 and TGFBR2 for the ligands may modulate the kinetics of assembly of the receptor and may explain the different biological activities of TGFB1, TGFB2 and TGFB3. Component of a complex composed of TSC22D1 (via N-terminus), TGFBR1 and TGFBR2; the interaction between TSC22D1 and TGFBR1 is inhibited by SMAD7 and promoted by TGFB1. Interacts with CD109; inhibits TGF-beta receptor activation in keratinocytes. Interacts with RBPMS. Interacts (unphosphorylated) with FKBP1A; prevents TGFBR1 phosphorylation by TGFBR2 and stabilizes it in the inactive conformation. Interacts with SMAD2, SMAD3 and ZFYVE9; ZFYVE9 recruits SMAD2 and SMAD3 to the TGF-beta receptor. Interacts with TRAF6 and MAP3K7; induces MAP3K7 activation by TRAF6. Interacts with PARD6A; involved in TGF-beta induced epithelial to mesenchymal transition. Interacts with NEDD4L. Interacts with SMAD7, SMURF1 and SMURF2; SMAD7 recruits NEDD4L, SMURF1 and SMURF2 to the TGF-beta receptor. Interacts with USP15 and VPS39. Interacts with SDCBP (via C-terminus). Interacts with CAV1 and this interaction is impaired in the presence of SDCBP. Interacts with APPL1; interaction is TGF beta dependent; mediates trafficking of the TGFBR1 from the endosomes to the nucleus via microtubules in a TRAF6-dependent manner. Interacts with GPR50; this interaction promotes the constitutive activation of SMAD signaling pathway. It depends on Mg(2+) as a cofactor. The cofactor is Mn(2+). In terms of processing, phosphorylated at basal levels in the absence of ligand. Activated upon phosphorylation by TGFBR2, mainly in the GS domain. Phosphorylation in the GS domain abrogates FKBP1A-binding. N-Glycosylated. Post-translationally, ubiquitinated; undergoes ubiquitination catalyzed by several E3 ubiquitin ligases including SMURF1, SMURF2 and NEDD4L2. Results in the proteasomal and/or lysosomal degradation of the receptor thereby negatively regulating its activity. Deubiquitinated by USP15, leading to stabilization of the protein and enhanced TGF-beta signal. Its ubiquitination and proteasome-mediated degradation is negatively regulated by SDCBP.

It is found in the cell membrane. The protein localises to the cell junction. Its subcellular location is the tight junction. The protein resides in the membrane raft. It localises to the cell surface. The catalysed reaction is L-threonyl-[receptor-protein] + ATP = O-phospho-L-threonyl-[receptor-protein] + ADP + H(+). It carries out the reaction L-seryl-[receptor-protein] + ATP = O-phospho-L-seryl-[receptor-protein] + ADP + H(+). Kept in an inactive conformation by FKBP1A preventing receptor activation in absence of ligand. CD109 is another inhibitor of the receptor. Transmembrane serine/threonine kinase forming with the TGF-beta type II serine/threonine kinase receptor, TGFBR2, the non-promiscuous receptor for the TGF-beta cytokines TGFB1, TGFB2 and TGFB3. Transduces the TGFB1, TGFB2 and TGFB3 signal from the cell surface to the cytoplasm and is thus regulating a plethora of physiological and pathological processes including cell cycle arrest in epithelial and hematopoietic cells, control of mesenchymal cell proliferation and differentiation, wound healing, extracellular matrix production, immunosuppression and carcinogenesis. The formation of the receptor complex composed of 2 TGFBR1 and 2 TGFBR2 molecules symmetrically bound to the cytokine dimer results in the phosphorylation and the activation of TGFBR1 by the constitutively active TGFBR2. Activated TGFBR1 phosphorylates SMAD2 which dissociates from the receptor and interacts with SMAD4. The SMAD2-SMAD4 complex is subsequently translocated to the nucleus where it modulates the transcription of the TGF-beta-regulated genes. This constitutes the canonical SMAD-dependent TGF-beta signaling cascade. Also involved in non-canonical, SMAD-independent TGF-beta signaling pathways. For instance, TGFBR1 induces TRAF6 autoubiquitination which in turn results in MAP3K7 ubiquitination and activation to trigger apoptosis. Also regulates epithelial to mesenchymal transition through a SMAD-independent signaling pathway through PARD6A phosphorylation and activation. This chain is TGF-beta receptor type-1 (TGFBR1), found in Sus scrofa (Pig).